Consider the following 393-residue polypeptide: Protein FAM47E (393 aa).

Residues 326-354 (VSHKAQEENFKKELQEQEELLADLHGTVA) are a coiled coil.

Belongs to the FAM47 family. As to quaternary structure, interacts with PRMT5; the interaction is direct. Interacts with WDR77.

The protein resides in the nucleus. Its subcellular location is the chromosome. It is found in the cytoplasm. Its function is as follows. Promotes histone methylation by localizing the arginine methyltransferase PRMT5 to chromatin. In Homo sapiens (Human), this protein is Protein FAM47E (FAM47E).